The primary structure comprises 302 residues: Sulfate adenylyltransferase subunit 2 (302 aa).

Belongs to the PAPS reductase family. CysD subfamily. In terms of assembly, heterodimer composed of CysD, the smaller subunit, and CysN.

The enzyme catalyses sulfate + ATP + H(+) = adenosine 5'-phosphosulfate + diphosphate. The protein operates within sulfur metabolism; hydrogen sulfide biosynthesis; sulfite from sulfate: step 1/3. In terms of biological role, with CysN forms the ATP sulfurylase (ATPS) that catalyzes the adenylation of sulfate producing adenosine 5'-phosphosulfate (APS) and diphosphate, the first enzymatic step in sulfur assimilation pathway. APS synthesis involves the formation of a high-energy phosphoric-sulfuric acid anhydride bond driven by GTP hydrolysis by CysN coupled to ATP hydrolysis by CysD. The sequence is that of Sulfate adenylyltransferase subunit 2 from Salmonella paratyphi A (strain AKU_12601).